We begin with the raw amino-acid sequence, 271 residues long: Short-chain type dehydrogenase/reductase (271 aa).

25-49 (IVTGASRGIGREIALNMAEKGAKVV) is an NAD(+) binding site. Substrate is bound at residue serine 166. The active-site Proton acceptor is the tyrosine 179.

It belongs to the short-chain dehydrogenases/reductases (SDR) family.

This is Short-chain type dehydrogenase/reductase from Picea abies (Norway spruce).